We begin with the raw amino-acid sequence, 113 residues long: uncharacterized protein (113 aa).

Helical transmembrane passes span 1–21 (MLIA…FGTW) and 48–68 (IMLA…ALIV).

This sequence to M.tuberculosis Rv0039.

The protein resides in the cell membrane. This is an uncharacterized protein from Mycobacterium leprae (strain TN).